A 504-amino-acid chain; its full sequence is Maturase K (504 aa).

This sequence belongs to the intron maturase 2 family. MatK subfamily.

The protein localises to the plastid. It is found in the chloroplast. Its function is as follows. Usually encoded in the trnK tRNA gene intron. Probably assists in splicing its own and other chloroplast group II introns. This Fagus crenata (Japanese beech) protein is Maturase K.